Reading from the N-terminus, the 323-residue chain is Extracellular endo-alpha-(1-&gt;5)-L-arabinanase 1 (323 aa).

An N-terminal signal peptide occupies residues 1 to 32; it reads MKKKKTWKRFLHFSSAALAAGLIFTSAAPAEA. The active-site Proton acceptor is the aspartate 44. Aspartate 44 serves as a coordination point for substrate. A Ca(2+)-binding site is contributed by aspartate 107. Substrate contacts are provided by residues glycine 125 and 160–163; that span reads NAID. Residue glutamate 165 participates in Ca(2+) binding. A substrate-binding site is contributed by 180 to 182; that stretch reads SFW. The active-site Proton donor is glutamate 215. Aspartate 287 serves as a coordination point for Ca(2+).

This sequence belongs to the glycosyl hydrolase 43 family. Ca(2+) is required as a cofactor.

It is found in the secreted. The catalysed reaction is Endohydrolysis of (1-&gt;5)-alpha-arabinofuranosidic linkages in (1-&gt;5)-arabinans.. The protein operates within glycan metabolism; L-arabinan degradation. In terms of biological role, involved in the degradation of arabinan and is a key enzyme in the complete degradation of the plant cell wall. Catalyzes the internal cleavage of alpha-(1-&gt;5)-L-arabinofuranosyl residues of linear 1,5-alpha-L-arabinan and of branched sugar beet arabinan. It displays no activity against heavily substituted arabinans or a range of other polysaccharides (larch wood arabinogalactan, wheat arabinoxylan and p-nitrophenyl-alpha-L-arabinofuranoside). The enzyme activity is progressively reduced as alpha-(1-&gt;5)-chains become shorter or more highly substituted. The chain is Extracellular endo-alpha-(1-&gt;5)-L-arabinanase 1 (abnA) from Bacillus subtilis (strain 168).